A 299-amino-acid chain; its full sequence is tRNA dimethylallyltransferase (299 aa).

ATP is bound at residue 11–18 (GPTAVGKT). Position 13–18 (13–18 (TAVGKT)) interacts with substrate. Residues 36–39 (DSQQ) form an interaction with substrate tRNA region.

It belongs to the IPP transferase family. In terms of assembly, monomer. It depends on Mg(2+) as a cofactor.

The catalysed reaction is adenosine(37) in tRNA + dimethylallyl diphosphate = N(6)-dimethylallyladenosine(37) in tRNA + diphosphate. Functionally, catalyzes the transfer of a dimethylallyl group onto the adenine at position 37 in tRNAs that read codons beginning with uridine, leading to the formation of N6-(dimethylallyl)adenosine (i(6)A). This is tRNA dimethylallyltransferase from Streptococcus pyogenes serotype M28 (strain MGAS6180).